The primary structure comprises 434 residues: Oxysterol-binding protein homolog 4 (434 aa).

The segment at 7-29 is ALPS motif; it reads SSSWTSFLKSIASFNGDLSSLSA. Residues 16–366 form an OSBP-related domain (ORD) region; it reads SIASFNGDLS…WQRRWFKDFD (351 aa). 24–29 is a binding site for a 1,2-diacyl-sn-glycero-3-phospho-(1D-myo-inositol 4-phosphate); that stretch reads LSSLSA. Glutamine 96 contacts 20-hydroxycholesterol. Glutamine 96 contacts 25-hydroxycholesterol. 7beta-hydroxycholesterol-binding residues include glutamine 96 and arginine 100. Residue glutamine 96 coordinates cholesterol. Glutamine 96 serves as a coordination point for ergosterol. Residues 109 to 112, 143 to 144, lysine 336, glutamate 340, and arginine 344 each bind a 1,2-diacyl-sn-glycero-3-phospho-(1D-myo-inositol 4-phosphate); these read KPLN and HH. At threonine 370 the chain carries Phosphothreonine. The residue at position 389 (serine 389) is a Phosphoserine.

This sequence belongs to the OSBP family.

It localises to the cytoplasm. It is found in the golgi apparatus membrane. Lipid transport protein (LTP) involved in non-vesicular transfer of lipids between membranes. Functions in phosphoinositide-coupled directional transport of various lipids by carrying the lipid molecule in a hydrophobic pocket and transferring it between membranes through the cytosol. Involved in maintenance of intracellular sterol distribution and homeostasis. Involved in lipid countertransport between the Golgi complex and membranes of the endoplasmic reticulum. Specifically exchanges sterol with phosphatidylinositol 4-phosphate (PI4P), delivering sterol to the Golgi in exchange for PI4P, which is delivered to the ER-localized PI4P phosphatase SAC1 for degradation. Thus, by maintaining a PI4P gradient at the ER/Golgi interface, SAC1 may drive PS transport. Displays a similar affinity for PI4P and sterols. Binds sterol and PI4P in a mutually exclusive manner. Involved in ergosterol transport from the plasma membrane (PM) to the ER. Mediates sterol transport from the ER to mitochondria. Involved in the negative regulation of Golgi-derived transport vesicle biogenesis. Plays a role in the positive regulation of vesicular transport of ceramide from the ER to the Golgi, negatively regulating COPII-mediated ER export of cargos. The sequence is that of Oxysterol-binding protein homolog 4 from Saccharomyces cerevisiae (strain ATCC 204508 / S288c) (Baker's yeast).